We begin with the raw amino-acid sequence, 396 residues long: MTENLIIHVDMDAFYASVELLDNPELRGQCVIVGGASNRGVVCSASYEARALGVRSAMPIVTARKLCPRGVFLPVRRARYQEISRKVFEIFHQYTPLVEPISLDEAFMDVTSSTRLFGSGEEIAANIRRQIESSLGITASAGIAKNKLVAKIASDLCKPNGLLVVPADQTQEFLDPLPISRLWGVGPASRNKLISLGVKTIRDVRKLTQEMLSANFGRNGEVIYAFARGMDDRPVEPPGAAKSIGREITFDRNVYTLEEAYKWMLFLSERVARRMRKEEATGRTVNIKVKYADFIQVTRSVTLESPTDDPGEIYTHAKKLLQKTLVGSKAVRLLGVTLSQLVTPGQAWQPGLFDDPTASERKRKLNQALDGIWDRFGSGTVEPAALVTDVAKHNLR.

The 181-residue stretch at 6-186 (IIHVDMDAFY…LPISRLWGVG (181 aa)) folds into the UmuC domain. Mg(2+) is bound by residues Asp10 and Asp104. Glu105 is an active-site residue.

It belongs to the DNA polymerase type-Y family. Monomer. It depends on Mg(2+) as a cofactor.

The protein resides in the cytoplasm. The enzyme catalyses DNA(n) + a 2'-deoxyribonucleoside 5'-triphosphate = DNA(n+1) + diphosphate. In terms of biological role, poorly processive, error-prone DNA polymerase involved in untargeted mutagenesis. Copies undamaged DNA at stalled replication forks, which arise in vivo from mismatched or misaligned primer ends. These misaligned primers can be extended by PolIV. Exhibits no 3'-5' exonuclease (proofreading) activity. May be involved in translesional synthesis, in conjunction with the beta clamp from PolIII. The protein is DNA polymerase IV of Desulfatibacillum aliphaticivorans.